Consider the following 392-residue polypeptide: Bone morphogenetic protein 15 (392 aa).

Positions 1 to 18 (MVLLSILRILFLCELVLF) are cleaved as a signal peptide. The propeptide occupies 19–267 (MEHRAQMAEG…ERESLLRRTR (249 aa)). N-linked (GlcNAc...) asparagine glycans are attached at residues asparagine 87, asparagine 147, and asparagine 237. Glutamine 268 bears the Pyrrolidone carboxylic acid; in P16 and P17 mark. Serine 273 bears the Phosphoserine; in P16 mark. O-linked (HexNAc...) threonine; in P17 glycosylation is present at threonine 277. 3 disulfide bridges follow: cysteine 291/cysteine 357, cysteine 320/cysteine 389, and cysteine 324/cysteine 391. Asparagine 373 carries an N-linked (GlcNAc...) asparagine glycan.

Belongs to the TGF-beta family. In terms of assembly, homodimer. But, in contrast to other members of this family, cannot be disulfide-linked.

It is found in the secreted. In terms of biological role, may be involved in follicular development. Oocyte-specific growth/differentiation factor that stimulates folliculogenesis and granulosa cell (GC) growth. In Homo sapiens (Human), this protein is Bone morphogenetic protein 15 (BMP15).